We begin with the raw amino-acid sequence, 638 residues long: 1-deoxy-D-xylulose-5-phosphate synthase (638 aa).

Thiamine diphosphate-binding positions include His79 and 120–122 (AHS). Asp151 is a Mg(2+) binding site. Residues 152–153 (GA), Asn180, Tyr289, and Glu371 each bind thiamine diphosphate. Asn180 contributes to the Mg(2+) binding site.

Belongs to the transketolase family. DXPS subfamily. In terms of assembly, homodimer. Mg(2+) serves as cofactor. Requires thiamine diphosphate as cofactor.

The catalysed reaction is D-glyceraldehyde 3-phosphate + pyruvate + H(+) = 1-deoxy-D-xylulose 5-phosphate + CO2. It functions in the pathway metabolic intermediate biosynthesis; 1-deoxy-D-xylulose 5-phosphate biosynthesis; 1-deoxy-D-xylulose 5-phosphate from D-glyceraldehyde 3-phosphate and pyruvate: step 1/1. In terms of biological role, catalyzes the acyloin condensation reaction between C atoms 2 and 3 of pyruvate and glyceraldehyde 3-phosphate to yield 1-deoxy-D-xylulose-5-phosphate (DXP). The sequence is that of 1-deoxy-D-xylulose-5-phosphate synthase from Rhizobium leguminosarum bv. trifolii (strain WSM2304).